The chain runs to 145 residues: MKLHELSPSEGSRKKRKRVGRGPGSGMGGTSTRGNKGHNQRSGGGTRPGFEGGQMPLHRRLPKRGFKNILAKSILIVNLSDLDRFEDKAVIDVAALKQTGLIKGMFDKVKILGDGEVSKAFTFKQCLVSKTARQKIEAAGGSIEL.

The tract at residues 1-58 is disordered; it reads MKLHELSPSEGSRKKRKRVGRGPGSGMGGTSTRGNKGHNQRSGGGTRPGFEGGQMPLH. 2 stretches are compositionally biased toward gly residues: residues 21 to 31 and 42 to 52; these read RGPGSGMGGTS and SGGGTRPGFEG.

It belongs to the universal ribosomal protein uL15 family. Part of the 50S ribosomal subunit.

Functionally, binds to the 23S rRNA. This is Large ribosomal subunit protein uL15 from Desulforapulum autotrophicum (strain ATCC 43914 / DSM 3382 / VKM B-1955 / HRM2) (Desulfobacterium autotrophicum).